The primary structure comprises 315 residues: ADP/ATP translocase (315 aa).

Over 1-13 (MSNKQETKILGMP) the chain is Mitochondrial intermembrane. 2 Solcar repeats span residues 13–106 (PPFV…FKAM) and 118–210 (KWMA…IKPV). Residues 14–37 (PFVVDFLMGGVSAAVSKTAAAPIE) traverse the membrane as a helical segment. Bongkrekate is bound at residue Lys-30. The Mitochondrial matrix segment spans residues 38 to 80 (RIKLLVQNQDEMIKAGRLDRRYNGIIDCFRRTTADEGLMALWR). Residues Ile-62 and 81–83 (GNT) contribute to the a cardiolipin site. Residues 81–104 (GNTANVIRYFPTQALNFAFRDKFK) traverse the membrane as a helical segment. An ADP-binding site is contributed by Arg-88. Bongkrekate-binding positions include 88-89 (RY) and Asn-96. Residues 105–115 (AMFGYKKDKDG) are Mitochondrial intermembrane-facing. The helical transmembrane segment at 116–145 (YAKWMAGNLASGGAAGATSLLFVYSLDYAR) threads the bilayer. The Mitochondrial matrix segment spans residues 146–184 (TRLANDAKSAKGGGARQFNGLIDVYRKTLASDGIAGLYR). A cardiolipin contacts are provided by residues Leu-166 and 184-185 (RG). The helical transmembrane segment at 185-213 (GFGPSVAGIVVYRGLYFGMYDSIKPVVLV) threads the bilayer. 196 to 197 (YR) is a bongkrekate binding site. Residues 214–216 (GPL) lie on the Mitochondrial intermembrane side of the membrane. Residues 217–242 (ANNFLASFLLGWCVTTGAGIASYPLD) form a helical membrane-spanning segment. Residues 218–304 (NNFLASFLLG…LSIYDQLQIL (87 aa)) form a Solcar repeat. Residues 243 to 283 (TVRRRMMMTSGEAVKYKSSIDAFRQIIAKEGVKSLFKGAGA) are Mitochondrial matrix-facing. Residue Arg-245 coordinates ADP. The short motif at 245-250 (RRRMMM) is the Nucleotide carrier signature motif element. A cardiolipin-binding positions include 260–261 (SS) and 280–282 (GAG). Residues 284–304 (NILRGVAGAGVLSIYDQLQIL) traverse the membrane as a helical segment. Over 305–315 (LFGKAFKGGSG) the chain is Mitochondrial intermembrane.

Belongs to the mitochondrial carrier (TC 2.A.29) family. Monomer.

It is found in the mitochondrion inner membrane. The enzyme catalyses ADP(in) + ATP(out) = ADP(out) + ATP(in). The matrix-open state (m-state) is inhibited by the membrane-permeable bongkrekic acid (BKA). The cytoplasmic-open state (c-state) is inhibited by the membrane-impermeable toxic inhibitor carboxyatractyloside (CATR). Its function is as follows. ADP:ATP antiporter that mediates import of ADP into the mitochondrial matrix for ATP synthesis, and export of ATP out to fuel the cell. Cycles between the cytoplasmic-open state (c-state) and the matrix-open state (m-state): operates by the alternating access mechanism with a single substrate-binding site intermittently exposed to either the cytosolic (c-state) or matrix (m-state) side of the inner mitochondrial membrane. The chain is ADP/ATP translocase from Thermothelomyces thermophilus (strain ATCC 42464 / BCRC 31852 / DSM 1799) (Sporotrichum thermophile).